Here is a 387-residue protein sequence, read N- to C-terminus: MSVIKMTDLDLAGKRVLIRADLNVPVKEGKVTSDARIRASLPTIEIALKQGARVMVTSHLGRPTEGEYNEEFSLLPVVDYLKEKLSSPVRLAKDYLDGVDVAEGELVVLENVRFNKGEKKDDEVLSKKYAALCDVFVMDAFGTAHRAQASTHGVGKFAPIACAGPLLSGELEALGKALSEPARPMVAIVGGSKVSTKLTVLDSLSKIADQLIVGGGIANTFVAAQGHNVGKSLYEADLIPEAKKLLETCDIPVPSDVRVASEFSETATATLKSVTAIKDEEQILDLGDVSAERLAEILKNAKTILWNGPVGVFEFPNFRKGTETIARAIAESDAFSIAGGGDTLAAIDLFGIADKISYISTGGGAFLEFVEGKKLPAVVMLEERAKQ.

Substrate is bound by residues 21 to 23 (DLN), Arg36, 59 to 62 (HLGR), Arg113, and Arg146. Residues Lys197, Glu314, and 340 to 343 (GGDT) contribute to the ATP site.

The protein belongs to the phosphoglycerate kinase family. In terms of assembly, monomer.

The protein localises to the cytoplasm. It catalyses the reaction (2R)-3-phosphoglycerate + ATP = (2R)-3-phospho-glyceroyl phosphate + ADP. Its pathway is carbohydrate degradation; glycolysis; pyruvate from D-glyceraldehyde 3-phosphate: step 2/5. This chain is Phosphoglycerate kinase, found in Pectobacterium carotovorum subsp. carotovorum (strain PC1).